The sequence spans 83 residues: Cytochrome b559 subunit alpha (83 aa).

Residues 21-35 (VIHSITIPSLFIAGW) traverse the membrane as a helical segment. Histidine 23 contacts heme.

Belongs to the PsbE/PsbF family. As to quaternary structure, heterodimer of an alpha subunit and a beta subunit. PSII is composed of 1 copy each of membrane proteins PsbA, PsbB, PsbC, PsbD, PsbE, PsbF, PsbH, PsbI, PsbJ, PsbK, PsbL, PsbM, PsbT, PsbX, PsbY, PsbZ, Psb30/Ycf12, at least 3 peripheral proteins of the oxygen-evolving complex and a large number of cofactors. It forms dimeric complexes. Heme b serves as cofactor.

It localises to the plastid. It is found in the chloroplast thylakoid membrane. This b-type cytochrome is tightly associated with the reaction center of photosystem II (PSII). PSII is a light-driven water:plastoquinone oxidoreductase that uses light energy to abstract electrons from H(2)O, generating O(2) and a proton gradient subsequently used for ATP formation. It consists of a core antenna complex that captures photons, and an electron transfer chain that converts photonic excitation into a charge separation. This chain is Cytochrome b559 subunit alpha, found in Anthoceros angustus (Hornwort).